The sequence spans 161 residues: Nucleotide-binding protein XCV3791 (161 aa).

Belongs to the YajQ family.

Functionally, nucleotide-binding protein. The polypeptide is Nucleotide-binding protein XCV3791 (Xanthomonas euvesicatoria pv. vesicatoria (strain 85-10) (Xanthomonas campestris pv. vesicatoria)).